Reading from the N-terminus, the 241-residue chain is 1-(5-phosphoribosyl)-5-[(5-phosphoribosylamino)methylideneamino] imidazole-4-carboxamide isomerase (241 aa).

The Proton acceptor role is filled by Asp-8. The active-site Proton donor is Asp-129.

The protein belongs to the HisA/HisF family.

Its subcellular location is the cytoplasm. It catalyses the reaction 1-(5-phospho-beta-D-ribosyl)-5-[(5-phospho-beta-D-ribosylamino)methylideneamino]imidazole-4-carboxamide = 5-[(5-phospho-1-deoxy-D-ribulos-1-ylimino)methylamino]-1-(5-phospho-beta-D-ribosyl)imidazole-4-carboxamide. The protein operates within amino-acid biosynthesis; L-histidine biosynthesis; L-histidine from 5-phospho-alpha-D-ribose 1-diphosphate: step 4/9. The protein is 1-(5-phosphoribosyl)-5-[(5-phosphoribosylamino)methylideneamino] imidazole-4-carboxamide isomerase of Caulobacter sp. (strain K31).